The following is a 332-amino-acid chain: tRNA dimethylallyltransferase (332 aa).

Residue 17-24 (GPTCSGKS) coordinates ATP. 19–24 (TCSGKS) provides a ligand contact to substrate. 2 interaction with substrate tRNA regions span residues 42–45 (DSMQ) and 166–170 (QRVAR).

This sequence belongs to the IPP transferase family. As to quaternary structure, monomer. The cofactor is Mg(2+).

The catalysed reaction is adenosine(37) in tRNA + dimethylallyl diphosphate = N(6)-dimethylallyladenosine(37) in tRNA + diphosphate. Its function is as follows. Catalyzes the transfer of a dimethylallyl group onto the adenine at position 37 in tRNAs that read codons beginning with uridine, leading to the formation of N6-(dimethylallyl)adenosine (i(6)A). In Gluconacetobacter diazotrophicus (strain ATCC 49037 / DSM 5601 / CCUG 37298 / CIP 103539 / LMG 7603 / PAl5), this protein is tRNA dimethylallyltransferase.